Here is a 123-residue protein sequence, read N- to C-terminus: uncharacterized protein (123 aa).

Positions 1–24 (MGGGGPPARVQGTEGSQTGGGAVA) are disordered.

This is an uncharacterized protein from Halorubrum pleomorphic virus 1 (HRPV-1).